Consider the following 108-residue polypeptide: Nucleoid-associated protein BARBAKC583_1239 (108 aa).

This sequence belongs to the YbaB/EbfC family. Homodimer.

The protein localises to the cytoplasm. The protein resides in the nucleoid. In terms of biological role, binds to DNA and alters its conformation. May be involved in regulation of gene expression, nucleoid organization and DNA protection. In Bartonella bacilliformis (strain ATCC 35685 / KC583 / Herrer 020/F12,63), this protein is Nucleoid-associated protein BARBAKC583_1239.